Reading from the N-terminus, the 1563-residue chain is Integrator complex subunit 5-like protein (1563 aa).

Composition is skewed to basic and acidic residues over residues 1–21 (MKEE…RNDN) and 31–44 (EDWR…KNEN). Disordered regions lie at residues 1-63 (MKEE…YDDD), 102-208 (KKSK…NITY), and 270-310 (NSLN…QQNP). Over residues 52 to 63 (GDSDDDDYYDDD) the composition is skewed to acidic residues. Low complexity-rich tracts occupy residues 109–133 (TAAT…TATA) and 141–202 (NNLL…NNNN). The helical transmembrane segment at 350 to 370 (DSIINWSLSTLTIITRLLIIL) threads the bilayer. Residues 381–398 (QQQQQQQQQQQQQQQQQQ) are compositionally biased toward low complexity. Disordered stretches follow at residues 381-417 (QQQQ…RQPI), 466-498 (SKSS…SSKT), 637-694 (FDNN…DNSS), and 784-828 (ILNN…SQEI). Residues 405–414 (FPPPPPPPLR) are compositionally biased toward pro residues. Low complexity-rich tracts occupy residues 468-496 (SSSS…SSSS), 639-686 (NNNN…NNNN), and 786-824 (NNNN…QQQQ). Residues 877-897 (IIIKLISLIGMDSIYSSLIIL) traverse the membrane as a helical segment. 2 disordered regions span residues 1154–1173 (SGNF…DEYG) and 1268–1303 (KQRM…DQNE). The segment covering 1160–1172 (GDDDDDEYGDDEY) has biased composition (acidic residues). Residues 1277 to 1288 (SIQQNGNINNEQ) show a composition bias toward low complexity. Acidic residues predominate over residues 1289–1303 (QQEEDDNDDADDQNE).

It belongs to the Integrator subunit 5 family. In terms of assembly, component of the Integrator complex. The core complex associates with protein phosphatase 2A subunits, to form the Integrator-PP2A (INTAC) complex.

It is found in the nucleus. The protein resides in the cytoplasm. The protein localises to the nucleus membrane. Functionally, component of the integrator complex, a multiprotein complex that terminates RNA polymerase II (Pol II) transcription in the promoter-proximal region of genes. The integrator complex provides a quality checkpoint during transcription elongation by driving premature transcription termination of transcripts that are unfavorably configured for transcriptional elongation: the complex terminates transcription by (1) catalyzing dephosphorylation of the C-terminal domain (CTD) of Pol II subunit polr2a, (2) degrading the exiting nascent RNA transcript via endonuclease activity and (3) promoting the release of Pol II from bound DNA. The integrator complex is also involved in terminating the synthesis of non-coding Pol II transcripts, such as enhancer RNAs (eRNAs), small nuclear RNAs (snRNAs), telomerase RNAs and long non-coding RNAs (lncRNAs). The protein is Integrator complex subunit 5-like protein of Dictyostelium discoideum (Social amoeba).